A 388-amino-acid polypeptide reads, in one-letter code: Flap endonuclease 1 (388 aa).

Residues 1 to 104 form an N-domain region; the sequence is MGILGLSKLI…GELAKRAERR (104 aa). D34 contributes to the Mg(2+) binding site. Residues R47 and R70 each coordinate DNA. Mg(2+) is bound by residues D86, E158, E160, D179, and D181. An I-domain region spans residues 122-253; that stretch reads QIEKFNRRLV…KRAIELIKSY (132 aa). E158 contacts DNA. DNA is bound by residues G231 and D233. D233 is a binding site for Mg(2+). Positions 336 to 344 are interaction with PCNA; it reads TQVRLDSFF. Residues 355-388 are disordered; the sequence is AAAKRKAEESKKSANSKKAKIGGGSGAGRGRRPK.

Belongs to the XPG/RAD2 endonuclease family. FEN1 subfamily. Interacts with PCNA. Three molecules of FEN1 bind to one PCNA trimer with each molecule binding to one PCNA monomer. PCNA stimulates the nuclease activity without altering cleavage specificity. Mg(2+) is required as a cofactor. Post-translationally, phosphorylated. Phosphorylation upon DNA damage induces relocalization to the nuclear plasma.

The protein resides in the nucleus. It localises to the nucleolus. Its subcellular location is the nucleoplasm. The protein localises to the mitochondrion. Functionally, structure-specific nuclease with 5'-flap endonuclease and 5'-3' exonuclease activities involved in DNA replication and repair. During DNA replication, cleaves the 5'-overhanging flap structure that is generated by displacement synthesis when DNA polymerase encounters the 5'-end of a downstream Okazaki fragment. It enters the flap from the 5'-end and then tracks to cleave the flap base, leaving a nick for ligation. Also involved in the long patch base excision repair (LP-BER) pathway, by cleaving within the apurinic/apyrimidinic (AP) site-terminated flap. Acts as a genome stabilization factor that prevents flaps from equilibrating into structures that lead to duplications and deletions. Also possesses 5'-3' exonuclease activity on nicked or gapped double-stranded DNA, and exhibits RNase H activity. Also involved in replication and repair of rDNA and in repairing mitochondrial DNA. This is Flap endonuclease 1 from Drosophila grimshawi (Hawaiian fruit fly).